Here is a 361-residue protein sequence, read N- to C-terminus: Myb/SANT-like DNA-binding domain-containing protein 7 (361 aa).

Positions 11-70 (RWSRQETRTLLSILGEAEYIQRLQTVHHNADVYQAVSKRMQQEGFRRTERQCRSKFKVLK) constitute a Myb-like domain. Disordered regions lie at residues 174–198 (TSDL…SYSS) and 217–272 (RLGV…ARRR). Polar residues-rich tracts occupy residues 187–198 (AGCSQGTPSYSS) and 226–249 (PCTS…SSSR).

The protein is Myb/SANT-like DNA-binding domain-containing protein 7 of Homo sapiens (Human).